Consider the following 618-residue polypeptide: Nuclear cap-binding protein subunit 3 (618 aa).

Residues 1–53 form a disordered region; it reads MAAVRGLRVSVKAGGGAEPEPMEVEEGEVEAAAGRTSPVEATADQTSPREVVP. Residues 20 to 29 are compositionally biased toward acidic residues; that stretch reads EPMEVEEGEV. The segment at 117–178 is RNA recognition motif (RRM) domain; the sequence is ETLYICGVDE…LSSKPTNEKG (62 aa). A WLDD motif; essential for 7-methylguanosine-containing mRNA cap binding motif is present at residues 146–149; that stretch reads WLDD. Disordered stretches follow at residues 170–250, 342–366, and 426–618; these read SSKP…DLRP, PEEP…DDRV, and QLKT…DTDS. A compositionally biased stretch (basic and acidic residues) spans 174 to 188; sequence TNEKGQRKKDGEHRS. A compositionally biased stretch (acidic residues) spans 205–223; that stretch reads DETEEGEVEEDNPNDAEVE. The span at 231 to 240 shows a compositional bias: polar residues; it reads PPETLSQAEQ. A compositionally biased stretch (acidic residues) spans 344–365; it reads EPIEEEEEEEEEEEEDMDEDDR. Residues 436–450 show a composition bias toward polar residues; that stretch reads SDSAGNSVKSRIGSK. Residues 451 to 468 are compositionally biased toward basic and acidic residues; the sequence is SHSEKPADVRLILEEKRQ. A compositionally biased stretch (low complexity) spans 469 to 481; sequence STASRQQSSSSGK. 3 stretches are compositionally biased toward basic and acidic residues: residues 507-517, 550-562, and 583-596; these read SRREPLSDVHS, PKEK…KSGE, and IKEK…KSRL. Positions 609 to 618 are enriched in low complexity; the sequence is ESSSGSDTDS.

Belongs to the NCBP3 family. As to quaternary structure, component of an alternative cap-binding complex (CBC) composed of NCBP1/CBP80 and NCBP3.

The protein localises to the nucleus. The protein resides in the cytoplasm. Its function is as follows. Associates with NCBP1/CBP80 to form an alternative cap-binding complex (CBC) which plays a key role in mRNA export. NCBP3 serves as adapter protein linking the capped RNAs (m7GpppG-capped RNA) to NCBP1/CBP80. Unlike the conventional CBC with NCBP2 which binds both small nuclear RNA (snRNA) and messenger (mRNA) and is involved in their export from the nucleus, the alternative CBC with NCBP3 does not bind snRNA and associates only with mRNA thereby playing a role in only mRNA export. This chain is Nuclear cap-binding protein subunit 3, found in Xenopus laevis (African clawed frog).